A 238-amino-acid polypeptide reads, in one-letter code: MKYIIANFKMNATQELINHFLNNLTLFDEQKIIIGLAPGDLYLKTFVNLAEIKKVNLYAQNPSLHNKGPYTGQISCLQLLDINIKNALVGHSEIRIDFSQSIIDQKIKISMDLLEQVIICVGETFDAYKQNKSLNFVLNQLANIINYKGLKKIIIAYEPIWAIGTDLELDFKHINYMIEGIKTYLYNCTGINIPILYGGSVNDNNINELCNQKLIDGFLIGNASLDVNVFNKIIDKCK.

7 to 9 provides a ligand contact to substrate; that stretch reads NFK. The Electrophile role is filled by His91. Glu158 functions as the Proton acceptor in the catalytic mechanism. Residues Gly164 and Ser200 each contribute to the substrate site.

Belongs to the triosephosphate isomerase family. Homodimer.

It is found in the cytoplasm. The enzyme catalyses D-glyceraldehyde 3-phosphate = dihydroxyacetone phosphate. The protein operates within carbohydrate biosynthesis; gluconeogenesis. It participates in carbohydrate degradation; glycolysis; D-glyceraldehyde 3-phosphate from glycerone phosphate: step 1/1. Involved in the gluconeogenesis. Catalyzes stereospecifically the conversion of dihydroxyacetone phosphate (DHAP) to D-glyceraldehyde-3-phosphate (G3P). In Ureaplasma parvum serovar 3 (strain ATCC 27815 / 27 / NCTC 11736), this protein is Triosephosphate isomerase.